A 710-amino-acid polypeptide reads, in one-letter code: DNA-directed RNA polymerase III subunit RPC5 (710 aa).

Basic and acidic residues predominate over residues 146–155 (DAKHREREAA). Residues 146–169 (DAKHREREAANEAGDSSQDEAEED) form a disordered region. S161 and S162 each carry phosphoserine. A Glycyl lysine isopeptide (Lys-Gly) (interchain with G-Cter in SUMO2) cross-link involves residue K171. S192 carries the phosphoserine modification. Y224 bears the Phosphotyrosine mark. A Glycyl lysine isopeptide (Lys-Gly) (interchain with G-Cter in SUMO2) cross-link involves residue K432. K498 participates in a covalent cross-link: Glycyl lysine isopeptide (Lys-Gly) (interchain with G-Cter in SUMO1); alternate. K498 is covalently cross-linked (Glycyl lysine isopeptide (Lys-Gly) (interchain with G-Cter in SUMO2); alternate). The segment at 498-526 (KEEPLSEEEADGAELEAEEEEPMDTAPST) is disordered. A compositionally biased stretch (acidic residues) spans 502 to 520 (LSEEEADGAELEAEEEEPM). S503 is modified (phosphoserine). Residues 558–710 (NPVACELKAF…MWYLKGTVQS (153 aa)) form a required for Pol III complex stability region. Residue K661 forms a Glycyl lysine isopeptide (Lys-Gly) (interchain with G-Cter in SUMO2) linkage.

Component of the RNA polymerase III complex consisting of at least 17 subunits: a ten-subunit horseshoe-shaped catalytic core composed of POLR3A/RPC1, POLR3B/RPC2, POLR1C/RPAC1, POLR1D/RPAC2, POLR3K/RPC10, POLR2E/RPABC1, POLR2F/RPABC2, POLR2H/RPABC3, POLR2K/RPABC4 and POLR2L/RPABC5; the stalk composed of two subunits POLR3H/RPC8 and CRCP/RPC9, forming a structural mobile part that protrudes out of the core and functions primarily in transcription initiation; and additional subunits homologous to general transcription factors of the RNA polymerase II machinery, POLR3D/RPC4-POLR3E/RPC5 heterodimer and POLR3/CRPC3-POLR3F/RPC6-POLR3G/RPC7 heterotrimer.

The protein resides in the nucleus. DNA-dependent RNA polymerase catalyzes the transcription of DNA into RNA using the four ribonucleoside triphosphates as substrates. Specific peripheric component of RNA polymerase III (Pol III) which synthesizes small non-coding RNAs including 5S rRNA, snRNAs, tRNAs and miRNAs from at least 500 distinct genomic loci. Assembles with POLR3D/RPC4 forming a subcomplex that binds the Pol III core. Enables recruitment of Pol III at transcription initiation site and drives transcription initiation from both type 2 and type 3 DNA promoters. Required for efficient transcription termination and reinitiation. Plays a key role in sensing and limiting infection by intracellular bacteria and DNA viruses. Acts as a nuclear and cytosolic DNA sensor involved in innate immune response. Can sense non-self dsDNA that serves as template for transcription into dsRNA. The non-self RNA polymerase III transcripts, such as Epstein-Barr virus-encoded RNAs (EBERs) induce type I interferon and NF-kappa-B through the RIG-I pathway. This Mus musculus (Mouse) protein is DNA-directed RNA polymerase III subunit RPC5.